The following is a 145-amino-acid chain: Large ribosomal subunit protein uL16 (145 aa).

The protein belongs to the universal ribosomal protein uL16 family. In terms of assembly, part of the 50S ribosomal subunit.

In terms of biological role, binds 23S rRNA and is also seen to make contacts with the A and possibly P site tRNAs. In Agathobacter rectalis (strain ATCC 33656 / DSM 3377 / JCM 17463 / KCTC 5835 / VPI 0990) (Eubacterium rectale), this protein is Large ribosomal subunit protein uL16.